The chain runs to 482 residues: G patch domain-containing protein 2-like (482 aa).

Phosphoserine is present on residues Ser31, Ser86, and Ser88. Thr91 is modified (phosphothreonine). Disordered regions lie at residues 195–222 and 408–482; these read SQPG…SECD and KRKR…TNGC. Positions 198-215 are enriched in basic and acidic residues; that stretch reads GRKERMECEAEEQKHGSD. The segment covering 414-427 has biased composition (low complexity); the sequence is VASASFSSPSPVHP. Polar residues predominate over residues 468 to 482; it reads EKNSGCSSSPGTNGC.

The polypeptide is G patch domain-containing protein 2-like (Gpatch2l) (Mus musculus (Mouse)).